Reading from the N-terminus, the 1335-residue chain is MIIKEYRIPLPMTVDEYRIAQLYMIQKKSRNETHGQGSGVEILENRPYTDGPGGSGQYTHKVYHVGMHIPGWFRSILPKAALRVVEESWNAYPYTRTRFTCPFVEKFSIDIETFYKTDTGENNNVFNLSPVEKSQLITDIIDIVKDPVPPSEYKTEEDPKLFQSVKTCRGPLSENWIQEYKKRLLPIMCAYKLCKVEFRYWGMQSKIERFIHDTGLRRVMVRAHRQAWCWQDEWYGLTMEKIRELEREVQLMLSRKMAQFSEEGPSELSKDSATKDQASGTTSDPGSKNGEPLGRGLKKQWSTSSKSSRSSKRGASPSRHSISEWRMQSIARDSDEGSEEEFFDAHENLYCTEEKQAKDMTKWNSNDLMDKMESPEPEESQDEIYQQSGSEFRVASSVEQLNIIEDEVSQPLAAPPSKIHVLLLVLHGGTILDTGAGDPSSKQGDTNTITNVFDTVMRVHYPSALGHLAIRLVPCPPICADAFALVSNLSPYGHDEGCLSSSQDHIPLAALPLLATSSPQYQEAVATVIQRANLAYGDFIKSQEGVTFNGQVCLIGDCVGGILAFDALCYSGQPVSESQSSSRRGSVVSMQDADLLSPGTLANAAHCSGGSGGGGSGGSSLESSRHLSRSNIDIPRSNGTEDSRRQLPRKRSDSSTYELDTIQQHQAFLSSLHASVLRNEPSSRRSSSSTMLDGAGALGKFDFEIADLFLFGCPLGLVLALRKTVIPSLDVFQLRPACQQVYNLFHPADPSASRLEPLLERRFHSLPPFSIPRYQRYPLGDGCSTLLADVLQTHNTVFQEHAAPSSPGTAPAGRGFRRASEISIASQVSGMAESYTASSIAQKGPSSLNHTPSIRRLSLLALPPPSPTTQGPRARARQVSPNLERAPCLPDLDIGEVAAKWWGQKRIDYALYCPDALTAFPTVALPHLFHASYWESTDVVSFLLRQVMRHDSSSILELDGKEVSVFTPSQPRERWQRKRTHVKLRNVAANHRINDAVANEDGPQVVTGRFMYGPLDMVTLTGEKVDVHIMTQPPSGEWLHLDTLVTNSSGRVSYTIPETHRLGVGVYPIKMVVRGDHTFADSYITVLPRGTEFVVFSIDGSFAASVSIMGSDPKVRAGAVDVVRHWQDLGYLIIYVTGRPDMQKQRVVAWLAQHNFPHGVVSFCDGLVHDPLRHKANFLKLLISELHLRAHAAYGSTKDVAVYNSISLSPMHIYIVGRPTKKLQQQCQFITDGYAAHLAQLKYNHRARPARNTATRMALRKGSFGLPGQSDFLRSRNHLLRTISAQPSGPSHRHDRTQTQMDSEQRGQRSMSVAASCWGRAMAGRLEPGAATGPK.

2 disordered regions span residues 32–51 (ETHGQGSGVEILENRPYTDG) and 262–341 (EEGP…SEEE). A compositionally biased stretch (polar residues) spans 275-286 (KDQASGTTSDPG). Residues 299-319 (KQWSTSSKSSRSSKRGASPSR) are compositionally biased toward low complexity. Phosphoserine is present on residues Ser334, Ser338, Ser365, and Ser586. The tract at residues 606 to 657 (HCSGGSGGGGSGGSSLESSRHLSRSNIDIPRSNGTEDSRRQLPRKRSDSSTY) is disordered. Gly residues predominate over residues 609–618 (GGSGGGGSGG). At Ser630 the chain carries Phosphoserine. A compositionally biased stretch (basic and acidic residues) spans 639-653 (GTEDSRRQLPRKRSD). Ser686, Ser687, and Ser688 each carry phosphoserine. One can recognise a DDHD domain in the interval 701-949 (FDFEIADLFL…VSFLLRQVMR (249 aa)). The residue at position 814 (Arg814) is an Omega-N-methylarginine. Positions 861-880 (ALPPPSPTTQGPRARARQVS) are disordered. Ser1263 is modified (phosphoserine). The disordered stretch occupies residues 1282 to 1313 (TISAQPSGPSHRHDRTQTQMDSEQRGQRSMSV). Positions 1298-1313 (QTQMDSEQRGQRSMSV) are enriched in polar residues.

This sequence belongs to the PtdIns transfer protein family. PI transfer class IIA subfamily. In terms of assembly, interacts with CPNE4 (via VWFA domain). Interacts with PTK2B via its C-terminus. In terms of tissue distribution, detected in retina and in the dentate gyrus of the cerebellum.

It localises to the endomembrane system. Its subcellular location is the cytoplasm. The protein localises to the cytoskeleton. Functionally, catalyzes the transfer of phosphatidylinositol and phosphatidylcholine between membranes (in vitro). Binds calcium ions. The polypeptide is Membrane-associated phosphatidylinositol transfer protein 2 (Pitpnm2) (Mus musculus (Mouse)).